A 99-amino-acid polypeptide reads, in one-letter code: NADH-quinone oxidoreductase subunit K (99 aa).

Transmembrane regions (helical) follow at residues 3-23, 28-48, and 59-79; these read PDNY…GVLL, IVMF…FVTF, and VVAF…LAII.

This sequence belongs to the complex I subunit 4L family. In terms of assembly, NDH-1 is composed of 14 different subunits. Subunits NuoA, H, J, K, L, M, N constitute the membrane sector of the complex.

The protein resides in the cell membrane. The enzyme catalyses a quinone + NADH + 5 H(+)(in) = a quinol + NAD(+) + 4 H(+)(out). NDH-1 shuttles electrons from NADH, via FMN and iron-sulfur (Fe-S) centers, to quinones in the respiratory chain. The immediate electron acceptor for the enzyme in this species is believed to be a menaquinone. Couples the redox reaction to proton translocation (for every two electrons transferred, four hydrogen ions are translocated across the cytoplasmic membrane), and thus conserves the redox energy in a proton gradient. The polypeptide is NADH-quinone oxidoreductase subunit K (Mycolicibacterium vanbaalenii (strain DSM 7251 / JCM 13017 / BCRC 16820 / KCTC 9966 / NRRL B-24157 / PYR-1) (Mycobacterium vanbaalenii)).